Here is a 271-residue protein sequence, read N- to C-terminus: Putative phosphoenolpyruvate synthase regulatory protein (271 aa).

Gly-152–Thr-159 is an ADP binding site.

This sequence belongs to the pyruvate, phosphate/water dikinase regulatory protein family. PSRP subfamily.

The enzyme catalyses [pyruvate, water dikinase] + ADP = [pyruvate, water dikinase]-phosphate + AMP + H(+). It catalyses the reaction [pyruvate, water dikinase]-phosphate + phosphate + H(+) = [pyruvate, water dikinase] + diphosphate. Bifunctional serine/threonine kinase and phosphorylase involved in the regulation of the phosphoenolpyruvate synthase (PEPS) by catalyzing its phosphorylation/dephosphorylation. In Thiocapsa roseopersicina, this protein is Putative phosphoenolpyruvate synthase regulatory protein.